The chain runs to 144 residues: Cysteine desulfuration protein SufE (144 aa).

Residue C51 is the Cysteine persulfide intermediate of the active site.

It belongs to the SufE family. In terms of assembly, homodimer. Interacts with SufS.

The protein localises to the cytoplasm. The protein operates within cofactor biosynthesis; iron-sulfur cluster biosynthesis. Its function is as follows. Participates in cysteine desulfuration mediated by SufS. Cysteine desulfuration mobilizes sulfur from L-cysteine to yield L-alanine and constitutes an essential step in sulfur metabolism for biosynthesis of a variety of sulfur-containing biomolecules. Functions as a sulfur acceptor for SufS, by mediating the direct transfer of the sulfur atom from the S-sulfanylcysteine of SufS, an intermediate product of cysteine desulfuration process. The protein is Cysteine desulfuration protein SufE of Wigglesworthia glossinidia brevipalpis.